A 27-amino-acid chain; its full sequence is Antimicrobial peptide 1 (27 aa).

In terms of tissue distribution, expressed by the skin glands.

It localises to the secreted. Its function is as follows. Has very weak antimicrobial activity against Gram-positive bacterium S.aureus and Gram-negative bacterium E.coli and stronger activity against yeast C.albicans. Enhances the antibacterial activity of XT3. Has hemolytic activity against human red blood cells. This chain is Antimicrobial peptide 1, found in Xenopus tropicalis (Western clawed frog).